The chain runs to 317 residues: L-lactate dehydrogenase (317 aa).

NAD(+) contacts are provided by residues V17, D38, K43, Y69, and 83–84; that span reads GA. Q86 and R92 together coordinate substrate. NAD(+)-binding positions include S105, 122–124, and S147; that span reads ATN. 124 to 127 is a substrate binding site; that stretch reads NPVD. Residue 152–155 participates in substrate binding; it reads DTAR. Residues R157 and H172 each contribute to the beta-D-fructose 1,6-bisphosphate site. The Proton acceptor role is filled by H179. The residue at position 224 (Y224) is a Phosphotyrosine. A substrate-binding site is contributed by T233.

This sequence belongs to the LDH/MDH superfamily. LDH family. As to quaternary structure, homotetramer.

The protein resides in the cytoplasm. It carries out the reaction (S)-lactate + NAD(+) = pyruvate + NADH + H(+). It participates in fermentation; pyruvate fermentation to lactate; (S)-lactate from pyruvate: step 1/1. Its activity is regulated as follows. Allosterically activated by fructose 1,6-bisphosphate (FBP). Catalyzes the conversion of lactate to pyruvate. The chain is L-lactate dehydrogenase from Geobacillus kaustophilus (strain HTA426).